Reading from the N-terminus, the 1416-residue chain is 1-phosphatidylinositol 4,5-bisphosphate phosphodiesterase eta-2 (1416 aa).

The segment at 1–155 is necessary for plasma membrane localization; it reads MSGPWPSPDS…WVTGLRYLMA (155 aa). The 109-residue stretch at 47–155 folds into the PH domain; it reads GAMQEGMQMV…WVTGLRYLMA (109 aa). EF-hand domains lie at 169–204 and 205–241; these read TRDQWLKQTFDEADKNGDGSLSIGEVLQLLHKLNVN and LPRQRVKQMFREADTDDHQGTLGFEEFCAFYKMMSTR. Asp-182, Asn-184, Asp-186, Ser-188, and Glu-193 together coordinate Ca(2+). A PI-PLC X-box domain is found at 326–471; sequence QDMTQPLSHY…LKGKILVKGK (146 aa). The active site involves His-341. Ca(2+) is bound by residues Asn-342, Glu-371, and Asp-373. The active site involves His-385. Glu-420 is a binding site for Ca(2+). Residues Lys-469 and Lys-471 each contribute to the substrate site. Phosphoserine occurs at positions 487 and 491. A disordered region spans residues 535–620; that stretch reads DPNNFSVSTL…RGATRQKKTM (86 aa). Residues 537–546 show a composition bias toward polar residues; that stretch reads NNFSVSTLSP. The span at 581-592 shows a compositional bias: basic residues; that stretch reads SRRKKKGSKLKK. Phosphoserine is present on residues Ser-595 and Ser-605. Residues 626–740 enclose the PI-PLC Y-box domain; sequence LSDLVKYTKS…GYVLKPGCMC (115 aa). Residues Ser-653 and Arg-680 each contribute to the substrate site. The C2 domain maps to 740 to 869; it reads CQGVFNPNSE…PGYRHVYLEG (130 aa). Positions 784, 786, 810, 839, 840, and 841 each coordinate Ca(2+). 3 disordered regions span residues 905-1109, 1121-1222, and 1315-1405; these read GSLD…GGWR, YSDA…LQPR, and ITSP…GPAS. The segment covering 1011-1021 has biased composition (pro residues); the sequence is APGPGPPPPAA. The segment covering 1073 to 1083 has biased composition (polar residues); the sequence is GSQTDGRSQPR. Residues 1143–1166 show a composition bias toward low complexity; the sequence is VSSSSSMSSSDTVIDLSLPSLGLG. Polar residues predominate over residues 1199–1208; it reads KSKSNPNLRA. Positions 1324–1333 are enriched in gly residues; the sequence is AGEGVAGGPG.

Requires Ca(2+) as cofactor. In terms of tissue distribution, expressed in retina and kidney.

The protein resides in the cytoplasm. It localises to the cell membrane. It carries out the reaction a 1,2-diacyl-sn-glycero-3-phospho-(1D-myo-inositol-4,5-bisphosphate) + H2O = 1D-myo-inositol 1,4,5-trisphosphate + a 1,2-diacyl-sn-glycerol + H(+). Activity is stimulated by GNB1:GNG2. Functionally, the production of the second messenger molecules diacylglycerol (DAG) and inositol 1,4,5-trisphosphate (IP3) is mediated by activated phosphatidylinositol-specific phospholipase C enzymes. This phospholipase activity is very sensitive to calcium. May be important for formation and maintenance of the neuronal network in the postnatal brain. The polypeptide is 1-phosphatidylinositol 4,5-bisphosphate phosphodiesterase eta-2 (Homo sapiens (Human)).